Here is a 1584-residue protein sequence, read N- to C-terminus: Adhesion G protein-coupled receptor B1 (1584 aa).

The first 30 residues, 1 to 30 (MRGQAAAPGPVWILAPLLLLLLLLGRRARA), serve as a signal peptide directing secretion. Topologically, residues 31 to 948 (AAGADAGPGP…ANMEKATLPS (918 aa)) are extracellular. Asn64 carries N-linked (GlcNAc...) asparagine glycosylation. The interval 146–167 (RRQQPPQHDGLRPRAGPPGPTD) is disordered. Residues 261 to 315 (TGGWKLWSLWGECTRDCGGGLQTRTRTCLPAPGVEGGGCEGVLEEGRQCNREACG) enclose the TSP type-1 1 domain. Intrachain disulfides connect Cys273–Cys309, Cys277–Cys314, and Cys288–Cys299. The segment at 313-335 (ACGPAGRTSSRSQSLRSTDARRR) is disordered. Low complexity predominate over residues 319–329 (RTSSRSQSLRS). 4 TSP type-1 domains span residues 354–407 (DPAA…AVCP), 409–462 (HGAW…ALCP), 467–520 (DGNW…QQCP), and 522–575 (DGKW…QRCP). 14 disulfide bridges follow: Cys366–Cys400, Cys370–Cys406, Cys381–Cys390, Cys421–Cys456, Cys425–Cys461, Cys436–Cys446, Cys479–Cys514, Cys483–Cys519, Cys494–Cys504, Cys534–Cys569, Cys538–Cys574, Cys549–Cys559, Cys581–Cys616, and Cys604–Cys634. Residue Asn401 is glycosylated (N-linked (GlcNAc...) asparagine). Residue Asn607 is glycosylated (N-linked (GlcNAc...) asparagine). Thr609 is modified (phosphothreonine). Asn692, Asn844, Asn877, and Asn881 each carry an N-linked (GlcNAc...) asparagine glycan. One can recognise a GAIN-B domain in the interval 760 to 939 (RDAYQVTDNL…AILAQLSADA (180 aa)). 2 disulfide bridges follow: Cys884/Cys921 and Cys909/Cys923. The tract at residues 884–939 (CILWDETDVPSSSAPPQLGPWSWRGCRTVPLDALRTRCLCDRLSTFAILAQLSADA) is GPS. Positions 927–943 (STFAILAQLSADANMEK) are N-terminal stalk following vasculostatin-120 cleavage which is not required for signaling activity. The chain crosses the membrane as a helical span at residues 949–969 (VTLIVGCGVSSLTLLMLVIIY). Over 970-980 (VSVWRYIRSER) the chain is Cytoplasmic. A helical transmembrane segment spans residues 981 to 1001 (SVILINFCLSIISSNALILIG). The Extracellular portion of the chain corresponds to 1002–1008 (QTQTRNK). The helical transmembrane segment at 1009–1029 (VVCTLVAAFLHFFFLSSFCWV) threads the bilayer. Residues 1030-1052 (LTEAWQSYMAVTGHLRNRLIRKR) lie on the Cytoplasmic side of the membrane. The helical transmembrane segment at 1053–1073 (FLCLGWGLPALVVAISVGFTK) threads the bilayer. The Extracellular portion of the chain corresponds to 1074–1093 (AKGYSTMNYCWLSLEGGLLY). The helical transmembrane segment at 1094–1114 (AFVGPAAAVVLVNMVIGILVF) threads the bilayer. Topologically, residues 1115 to 1136 (NKLVSKDGITDKKLKERAGASL) are cytoplasmic. Residues 1137 to 1157 (WSSCVVLPLLALTWMSAVLAV) form a helical membrane-spanning segment. The Extracellular portion of the chain corresponds to 1158–1166 (TDRRSALFQ). Residues 1167–1187 (ILFAVFDSLEGFVIVMVHCIL) traverse the membrane as a helical segment. Over 1188–1584 (RREVQDAVKC…QDIIDLQTEV (397 aa)) the chain is Cytoplasmic. The involved in interaction with MAGI1 stretch occupies residues 1365 to 1584 (YSIHIDQMPQ…QDIIDLQTEV (220 aa)). 2 disordered regions span residues 1385–1475 (EASL…RRKS) and 1501–1548 (RKLQ…KKEL). Positions 1391–1439 (RSPPSRQPPSGGPPEAPPAQPPPPPPPPPPPPQQPLPPPPNLEPAPPSL) are enriched in pro residues. The segment covering 1453–1469 (TGPSTKNENVATLSVSS) has biased composition (polar residues). Ser1469 is subject to Phosphoserine. Basic and acidic residues predominate over residues 1501-1522 (RKLQHAAEKDKEVLGPDSKPEK). The interval 1581 to 1584 (QTEV) is indispensable for interaction with MAGI1.

Belongs to the G-protein coupled receptor 2 family. LN-TM7 subfamily. In terms of assembly, interacts with ELMO1 and DOCK. When bound to ELMO1 and DOCK1, acts as a module to promote apoptotic cell engulfment. Interacts with MDM2; the interaction results in inhibition of MDM2-mediated ubiquitination and degradation of DLG4/PSD95. Interacts with PARD3 and TIAM1; the interaction is required for correct dendritic. localization of PARD3 and TIAM1 and for dendritic spine formation. Interacts with MAGI1. Interacts with MAGI3. Interacts with BAIAP2. Interacts with PHYHIP. Interacts with DLG4 (via PDZ domain). Vasculostatin-120: Interacts with CD36. Vasculostatin-120: Interacts with ARRB2. Interacts with BAIAP3; this interaction is direct. Proteolytically cleaved to produce vasculostatin-40 and vasculostatin-120. Vasculostatin-40 is the major form and is produced through proteolytic cleavage by MMP14 between residues 321 and 329 with cleavage likely to be between Ser-326 and Leu-327. Post-translationally, ubiquitinated. Expressed in brain (at protein level). Expressed on mononuclear phagocytes and monocyte-derived macrophages in the gastric mucosa (at protein level). Expressed in normal pancreatic tissue but not in pancreatic tumor tissue. Reduced or no expression is observed in some glioblastomas.

Its subcellular location is the cell membrane. It is found in the cell projection. The protein localises to the phagocytic cup. The protein resides in the cell junction. It localises to the focal adhesion. Its subcellular location is the dendritic spine. It is found in the postsynaptic density. The protein localises to the secreted. Its function is as follows. Phosphatidylserine receptor which enhances the engulfment of apoptotic cells. Also mediates the binding and engulfment of Gram-negative bacteria. Stimulates production of reactive oxygen species by macrophages in response to Gram-negative bacteria, resulting in enhanced microbicidal macrophage activity. In the gastric mucosa, required for recognition and engulfment of apoptotic gastric epithelial cells. Promotes myoblast fusion. Activates the Rho pathway in a G-protein-dependent manner. Inhibits MDM2-mediated ubiquitination and degradation of DLG4/PSD95, promoting DLG4 stability and regulating synaptic plasticity. Required for the formation of dendritic spines by ensuring the correct localization of PARD3 and TIAM1. Potent inhibitor of angiogenesis in brain and may play a significant role as a mediator of the p53/TP53 signal in suppression of glioblastoma. In terms of biological role, inhibits angiogenesis in a CD36-dependent manner. Functionally, inhibits angiogenesis. This is Adhesion G protein-coupled receptor B1 from Homo sapiens (Human).